A 223-amino-acid chain; its full sequence is Endonuclease NucS (223 aa).

It belongs to the NucS endonuclease family.

It is found in the cytoplasm. Functionally, cleaves both 3' and 5' ssDNA extremities of branched DNA structures. This chain is Endonuclease NucS, found in Mycobacterium sp. (strain JLS).